The following is a 213-amino-acid chain: 5-oxoprolinase subunit B (213 aa).

This sequence belongs to the PxpB family. As to quaternary structure, forms a complex composed of PxpA, PxpB and PxpC.

It carries out the reaction 5-oxo-L-proline + ATP + 2 H2O = L-glutamate + ADP + phosphate + H(+). Its function is as follows. Catalyzes the cleavage of 5-oxoproline to form L-glutamate coupled to the hydrolysis of ATP to ADP and inorganic phosphate. This Haemophilus influenzae (strain ATCC 51907 / DSM 11121 / KW20 / Rd) protein is 5-oxoprolinase subunit B.